The sequence spans 102 residues: Large ribosomal subunit protein bL21 (102 aa).

It belongs to the bacterial ribosomal protein bL21 family. As to quaternary structure, part of the 50S ribosomal subunit. Contacts protein L20.

In terms of biological role, this protein binds to 23S rRNA in the presence of protein L20. The chain is Large ribosomal subunit protein bL21 from Lawsonia intracellularis.